We begin with the raw amino-acid sequence, 255 residues long: 4-hydroxy-tetrahydrodipicolinate reductase (255 aa).

NAD(+) is bound by residues 13 to 18, 90 to 92, and 114 to 117; these read GCNGKM, CTT, and SANM. The Proton donor/acceptor role is filled by His147. His148 provides a ligand contact to (S)-2,3,4,5-tetrahydrodipicolinate. Lys151 functions as the Proton donor in the catalytic mechanism. 157-158 contributes to the (S)-2,3,4,5-tetrahydrodipicolinate binding site; the sequence is GT.

It belongs to the DapB family.

It localises to the cytoplasm. The catalysed reaction is (S)-2,3,4,5-tetrahydrodipicolinate + NAD(+) + H2O = (2S,4S)-4-hydroxy-2,3,4,5-tetrahydrodipicolinate + NADH + H(+). It carries out the reaction (S)-2,3,4,5-tetrahydrodipicolinate + NADP(+) + H2O = (2S,4S)-4-hydroxy-2,3,4,5-tetrahydrodipicolinate + NADPH + H(+). The protein operates within amino-acid biosynthesis; L-lysine biosynthesis via DAP pathway; (S)-tetrahydrodipicolinate from L-aspartate: step 4/4. In terms of biological role, catalyzes the conversion of 4-hydroxy-tetrahydrodipicolinate (HTPA) to tetrahydrodipicolinate. This Clostridium tetani (strain Massachusetts / E88) protein is 4-hydroxy-tetrahydrodipicolinate reductase.